A 238-amino-acid chain; its full sequence is Complement C1q-like protein 4 (238 aa).

The signal sequence occupies residues 1 to 15 (MVLLLLVAIPLLVHS). Residues 37–102 (SRGQGPDGAP…PGPGPGGAAP (66 aa)) are disordered. The region spanning 53-96 (PPGAKGEVGRRGKAGLRGPPGPPGPRGPPGEPGRPGPPGPPGPG) is the Collagen-like domain. Positions 71 to 96 (PPGPPGPRGPPGEPGRPGPPGPPGPG) are enriched in pro residues. The C1q domain occupies 105–238 (GYVPRIAFYA…TFSGFIIYPD (134 aa)).

Forms homooligomers, predominantly dimers or trimers. Forms heterooligomers with C1QL1, C1QL2 and C1QL3, when proteins are coexpressed; this interaction does not occur after secretion. Interacts with ADGRB3. In terms of tissue distribution, highly expressed in testis and adipose tissue, brown adipose tissue expressing higher levels than subcutaneous and visceral white adipose tissue. In gonadal fat pad, expressed at lower levels in adipocytes than in the stromal vascular fraction (VSP), which contains preadipocytes, fibroblasts, endothelial cells and occasional immune cells. Expression exhibits sexually dimorphism, with higher levels in females than in males.

It localises to the secreted. Functionally, may regulate the number of excitatory synapses that are formed on hippocampus neurons. Has no effect on inhibitory synapses. May inhibit adipocyte differentiation at an early stage of the process. This chain is Complement C1q-like protein 4 (C1ql4), found in Mus musculus (Mouse).